We begin with the raw amino-acid sequence, 491 residues long: Beta-galactosidase (491 aa).

Glutamate 209 acts as the Proton donor in catalysis. Glutamate 389 (nucleophile) is an active-site residue.

It belongs to the glycosyl hydrolase 1 family.

The enzyme catalyses Hydrolysis of terminal non-reducing beta-D-galactose residues in beta-D-galactosides.. The sequence is that of Beta-galactosidase (bgaS) from Sulfolobus acidocaldarius (strain ATCC 33909 / DSM 639 / JCM 8929 / NBRC 15157 / NCIMB 11770).